Consider the following 834-residue polypeptide: Unextended protein (834 aa).

The first 20 residues, 1-20 (MNTYFISFITIIIFANGING), serve as a signal peptide directing secretion. Over 21 to 182 (TSVDTSNKLL…DFLKIKTFEP (162 aa)) the chain is Extracellular. Residues Asn-38, Asn-42, and Asn-156 are each glycosylated (N-linked (GlcNAc...) asparagine). Residues 182–361 (PLIPVWLAII…NDVNDLDKNE (180 aa)) enclose the CNNM transmembrane domain. Residues 183-203 (LIPVWLAIIIIVTCLGFSALF) form a helical membrane-spanning segment. Residues 204 to 244 (SGLNLGLMSMDRTELKILRNTGTEKEKKYASKIAPVRDQGN) are Cytoplasmic-facing. The helical transmembrane segment at 245 to 265 (YLLCSILLGNVLVNSTFTILL) threads the bilayer. The Extracellular portion of the chain corresponds to 266 to 267 (DG). A helical transmembrane segment spans residues 268–288 (LTSGLFAVIFSTLAIVLFGEI). At 289 to 298 (TPQAVCSRHG) the chain is on the cytoplasmic side. The helical transmembrane segment at 299–319 (LAIGAKTILVTKTVMAITAPL) threads the bilayer. Over 320-834 (SYPVSRILDK…DKFESKQSKP (515 aa)) the chain is Extracellular. 2 CBS domains span residues 380-441 (MTHI…NTPL) and 448-515 (YQNP…IVDE). Asn-522 carries N-linked (GlcNAc...) asparagine glycosylation. A nucleoside 3',5'-cyclic phosphate is bound at residue 604-656 (YIFTQGKAVDFFVLILEGRVEVTIGKEALMFESGPFTYFGTQALVPNVVIDSP). Positions 739–765 (CFAQNQSTRRLSNRSINSSPTNMNRSP) are disordered. Residues 740 to 763 (FAQNQSTRRLSNRSINSSPTNMNR) are compositionally biased toward polar residues. N-linked (GlcNAc...) asparagine glycans are attached at residues Asn-743, Asn-751, and Asn-790. Positions 807–834 (SGEQDTTAASMPLLPKLDDKFESKQSKP) are disordered. Positions 822 to 834 (KLDDKFESKQSKP) are enriched in basic and acidic residues.

Belongs to the ACDP family. As to quaternary structure, interacts with PRL-1, possibly at the plasma membrane.

It localises to the cell membrane. Its function is as follows. Probable metal transporter. Acts downstream of PRL-1 and protects the nervous system against olfactory carbon dioxide stimulation. This is Unextended protein from Drosophila melanogaster (Fruit fly).